A 127-amino-acid polypeptide reads, in one-letter code: Large ribosomal subunit protein bL17 (127 aa).

It belongs to the bacterial ribosomal protein bL17 family. As to quaternary structure, part of the 50S ribosomal subunit. Contacts protein L32.

This Xanthomonas oryzae pv. oryzae (strain KACC10331 / KXO85) protein is Large ribosomal subunit protein bL17.